The sequence spans 165 residues: Urease accessory protein UreE (165 aa).

It belongs to the UreE family.

It localises to the cytoplasm. Involved in urease metallocenter assembly. Binds nickel. Probably functions as a nickel donor during metallocenter assembly. The polypeptide is Urease accessory protein UreE (Micrococcus luteus (strain ATCC 4698 / DSM 20030 / JCM 1464 / CCM 169 / CCUG 5858 / IAM 1056 / NBRC 3333 / NCIMB 9278 / NCTC 2665 / VKM Ac-2230) (Micrococcus lysodeikticus)).